The following is a 264-amino-acid chain: S-adenosylmethionine decarboxylase proenzyme (264 aa).

The active-site Schiff-base intermediate with substrate; via pyruvic acid is Ser113. A Pyruvic acid (Ser); by autocatalysis modification is found at Ser113. His118 (proton acceptor; for processing activity) is an active-site residue. Cys141 serves as the catalytic Proton donor; for catalytic activity.

Belongs to the prokaryotic AdoMetDC family. Type 2 subfamily. Heterooctamer of four alpha and four beta chains arranged as a tetramer of alpha/beta heterodimers. Pyruvate serves as cofactor. Post-translationally, is synthesized initially as an inactive proenzyme. Formation of the active enzyme involves a self-maturation process in which the active site pyruvoyl group is generated from an internal serine residue via an autocatalytic post-translational modification. Two non-identical subunits are generated from the proenzyme in this reaction, and the pyruvate is formed at the N-terminus of the alpha chain, which is derived from the carboxyl end of the proenzyme. The post-translation cleavage follows an unusual pathway, termed non-hydrolytic serinolysis, in which the side chain hydroxyl group of the serine supplies its oxygen atom to form the C-terminus of the beta chain, while the remainder of the serine residue undergoes an oxidative deamination to produce ammonia and the pyruvoyl group blocking the N-terminus of the alpha chain.

It carries out the reaction S-adenosyl-L-methionine + H(+) = S-adenosyl 3-(methylsulfanyl)propylamine + CO2. It participates in amine and polyamine biosynthesis; S-adenosylmethioninamine biosynthesis; S-adenosylmethioninamine from S-adenosyl-L-methionine: step 1/1. In terms of biological role, catalyzes the decarboxylation of S-adenosylmethionine to S-adenosylmethioninamine (dcAdoMet), the propylamine donor required for the synthesis of the polyamines spermine and spermidine from the diamine putrescine. The sequence is that of S-adenosylmethionine decarboxylase proenzyme from Stenotrophomonas maltophilia (strain K279a).